The sequence spans 293 residues: 4-hydroxy-tetrahydrodipicolinate synthase (293 aa).

Thr-45 lines the pyruvate pocket. Tyr-133 acts as the Proton donor/acceptor in catalysis. Residue Lys-162 is the Schiff-base intermediate with substrate of the active site. Ile-204 is a binding site for pyruvate.

The protein belongs to the DapA family. As to quaternary structure, homotetramer; dimer of dimers.

It is found in the cytoplasm. It catalyses the reaction L-aspartate 4-semialdehyde + pyruvate = (2S,4S)-4-hydroxy-2,3,4,5-tetrahydrodipicolinate + H2O + H(+). Its pathway is amino-acid biosynthesis; L-lysine biosynthesis via DAP pathway; (S)-tetrahydrodipicolinate from L-aspartate: step 3/4. In terms of biological role, catalyzes the condensation of (S)-aspartate-beta-semialdehyde [(S)-ASA] and pyruvate to 4-hydroxy-tetrahydrodipicolinate (HTPA). This Brucella abortus biovar 1 (strain 9-941) protein is 4-hydroxy-tetrahydrodipicolinate synthase.